A 171-amino-acid polypeptide reads, in one-letter code: Lipoprotein signal peptidase (171 aa).

Helical transmembrane passes span 67 to 87 and 88 to 108; these read YALL…LWRS and TSKL…GNAY. Residues Asp-118 and Asp-136 contribute to the active site. The helical transmembrane segment at 127 to 147 threads the bilayer; sequence FSWYVFNLADAAIVAGVALLL.

It belongs to the peptidase A8 family.

It is found in the cell inner membrane. The enzyme catalyses Release of signal peptides from bacterial membrane prolipoproteins. Hydrolyzes -Xaa-Yaa-Zaa-|-(S,diacylglyceryl)Cys-, in which Xaa is hydrophobic (preferably Leu), and Yaa (Ala or Ser) and Zaa (Gly or Ala) have small, neutral side chains.. The protein operates within protein modification; lipoprotein biosynthesis (signal peptide cleavage). Its function is as follows. This protein specifically catalyzes the removal of signal peptides from prolipoproteins. This is Lipoprotein signal peptidase from Methylocella silvestris (strain DSM 15510 / CIP 108128 / LMG 27833 / NCIMB 13906 / BL2).